A 302-amino-acid polypeptide reads, in one-letter code: Protein transport protein SEC13 homolog A (302 aa).

WD repeat units follow at residues 9 to 48 (GHSD…GSQH), 54 to 95 (GHRG…QWTQ), 101 to 142 (DHKV…GWDT), 148 to 201 (AHPV…WKMD), 208 to 251 (KHTD…EQWE), and 257 to 296 (DFKT…EWEQ).

It belongs to the WD repeat SEC13 family. Interacts with MAG5, SEC31A and SEC31B.

Its subcellular location is the golgi apparatus. It is found in the endoplasmic reticulum. In terms of biological role, required for protein transport from the endoplasmic reticulum to the Golgi apparatus. The protein is Protein transport protein SEC13 homolog A of Arabidopsis thaliana (Mouse-ear cress).